A 147-amino-acid polypeptide reads, in one-letter code: Large ribosomal subunit protein bL9 (147 aa).

The protein belongs to the bacterial ribosomal protein bL9 family.

In terms of biological role, binds to the 23S rRNA. The protein is Large ribosomal subunit protein bL9 of Thermoanaerobacter pseudethanolicus (strain ATCC 33223 / 39E) (Clostridium thermohydrosulfuricum).